Reading from the N-terminus, the 448-residue chain is UDP-N-acetylmuramoylalanine--D-glutamate ligase (448 aa).

Position 116-122 (glycine 116–threonine 122) interacts with ATP.

Belongs to the MurCDEF family.

It localises to the cytoplasm. The enzyme catalyses UDP-N-acetyl-alpha-D-muramoyl-L-alanine + D-glutamate + ATP = UDP-N-acetyl-alpha-D-muramoyl-L-alanyl-D-glutamate + ADP + phosphate + H(+). Its pathway is cell wall biogenesis; peptidoglycan biosynthesis. In terms of biological role, cell wall formation. Catalyzes the addition of glutamate to the nucleotide precursor UDP-N-acetylmuramoyl-L-alanine (UMA). In Pseudomonas syringae pv. syringae (strain B728a), this protein is UDP-N-acetylmuramoylalanine--D-glutamate ligase.